A 75-amino-acid polypeptide reads, in one-letter code: Sec-independent protein translocase protein TatA (75 aa).

Residues 1–21 (MGSFSIWHWLIVLVIVVLVFG) form a helical membrane-spanning segment. Composition is skewed to basic and acidic residues over residues 43–54 (MRDSEKSGEDVQ) and 66–75 (ATDKSHTVSH). The segment at 43-75 (MRDSEKSGEDVQQKIGGDTLDAQATDKSHTVSH) is disordered.

This sequence belongs to the TatA/E family. As to quaternary structure, the Tat system comprises two distinct complexes: a TatABC complex, containing multiple copies of TatA, TatB and TatC subunits, and a separate TatA complex, containing only TatA subunits. Substrates initially bind to the TatABC complex, which probably triggers association of the separate TatA complex to form the active translocon.

It is found in the cell inner membrane. Functionally, part of the twin-arginine translocation (Tat) system that transports large folded proteins containing a characteristic twin-arginine motif in their signal peptide across membranes. TatA could form the protein-conducting channel of the Tat system. This is Sec-independent protein translocase protein TatA from Aromatoleum aromaticum (strain DSM 19018 / LMG 30748 / EbN1) (Azoarcus sp. (strain EbN1)).